A 385-amino-acid chain; its full sequence is Zinc finger protein B385R (385 aa).

Residues 166–190 (LQCPNCGCIQELMGTIFDETHFYNH) form a C2H2-type zinc finger.

The protein belongs to the asfivirus B385R family.

The chain is Zinc finger protein B385R from Ornithodoros (relapsing fever ticks).